The sequence spans 464 residues: Probable glycosyltransferase Saci_1499 (464 aa).

The next 6 membrane-spanning stretches (helical) occupy residues 6–26 (IFLNLLLFVYPAVFIIYQIIL), 300–320 (LIIYLLQYTPVIVTFFISTLL), 337–357 (ALLFWLVSLGLYASLLLSLAL), 373–393 (LTAFTVSISPFIVFNFFKGLL), 416–436 (IIAIIGVFGLLYLLSSILYIY), and 439–459 (YYVTGIWLLYYSSAYLYTMLL).

This sequence belongs to the glycosyltransferase 2 family.

Its subcellular location is the cell membrane. Probably part of a 4-gene DNA damage response locus in which the upstream ups system, in combination with this downstream locus, functions in homologous recombination to rescue Sulfolobales from DNA-damaging threats. The protein is Probable glycosyltransferase Saci_1499 of Sulfolobus acidocaldarius (strain ATCC 33909 / DSM 639 / JCM 8929 / NBRC 15157 / NCIMB 11770).